We begin with the raw amino-acid sequence, 416 residues long: 26S proteasome regulatory subunit 8 (416 aa).

Positions 1-18 are enriched in low complexity; that stretch reads MAPPASTASSADPSKPTA. The disordered stretch occupies residues 1–29; it reads MAPPASTASSADPSKPTAQKLTEESDEKT. 200 to 207 is a binding site for ATP; the sequence is GPPGTGKT.

It belongs to the AAA ATPase family. Component of the 19S proteasome regulatory particle complex. The 26S proteasome consists of a 20S core particle (CP) and two 19S regulatory subunits (RP). Interacts with elt-2.

It localises to the cytoplasm. It is found in the nucleus. In terms of biological role, component of the 26S proteasome, a multiprotein complex involved in the ATP-dependent degradation of ubiquitinated proteins. This complex plays a key role in the maintenance of protein homeostasis by removing misfolded or damaged proteins, which could impair cellular functions, and by removing proteins whose functions are no longer required. Therefore, the proteasome participates in numerous cellular processes, including cell cycle progression, apoptosis, or DNA damage repair. Belongs to the heterohexameric ring of AAA (ATPases associated with diverse cellular activities) proteins that unfolds ubiquitinated target proteins that are concurrently translocated into a proteolytic chamber and degraded into peptides. In addition, regulates gene expression in response to bacterial infection. Binds to the GATA transcription factor elt-2 to control its transcriptional activity and thus the expression of elt-2-dependent genes in response to infection by Gram-negative bacteria such as P.aeruginosa. This chain is 26S proteasome regulatory subunit 8, found in Caenorhabditis elegans.